The chain runs to 151 residues: Large ribosomal subunit protein bL9 (151 aa).

It belongs to the bacterial ribosomal protein bL9 family.

In terms of biological role, binds to the 23S rRNA. This is Large ribosomal subunit protein bL9 from Kosmotoga olearia (strain ATCC BAA-1733 / DSM 21960 / TBF 19.5.1).